Reading from the N-terminus, the 1681-residue chain is Y' element ATP-dependent helicase protein 1 copy 2 (1681 aa).

Positions 683 to 860 (EIYMADTPSV…LQRIGLTGLA (178 aa)) constitute a Helicase ATP-binding domain. Residue 696–703 (APPGYGKT) coordinates ATP. The 150-residue stretch at 917–1066 (KLLLALFEIE…EFYGLESKKG (150 aa)) folds into the Helicase C-terminal domain. A compositionally biased stretch (low complexity) spans 1140–1283 (ANASTNATTN…ATTTESTNAS (144 aa)). Residues 1140–1307 (ANASTNATTN…RFHPVTDINK (168 aa)) are disordered. The segment covering 1284 to 1307 (AKEDANKDGNAEDNRFHPVTDINK) has biased composition (basic and acidic residues).

The protein belongs to the helicase family. Yeast subtelomeric Y' repeat subfamily.

Functionally, catalyzes DNA unwinding and is involved in telomerase-independent telomere maintenance. The chain is Y' element ATP-dependent helicase protein 1 copy 2 (YRF1-2) from Saccharomyces cerevisiae (strain ATCC 204508 / S288c) (Baker's yeast).